The chain runs to 227 residues: MKLCVAFDVASYDECINLAKELKGLDLWVKIGLRSYLRDGVKLLEAIKKVDNFKIFLDLKLYDIPNTMADACEELAKLDVNMFNIHASAGKSAMCMIMERLNALSKRPLVLAVSALTSFDEQEFFSVYKQDIKQAVKDFSKISYESGLDGMVCSVYESLLIKENTSANFITLTPGIRPFKENSDDQKRVADIQCAKDNLSDFIVVGRPIYKAKEPRRICENILEHLK.

Substrate-binding positions include D8, K30, 58 to 67 (DLKLYDIPNT), T117, R177, Q186, G206, and R207. The active-site Proton donor is the K60.

It belongs to the OMP decarboxylase family. Type 1 subfamily. As to quaternary structure, homodimer.

The enzyme catalyses orotidine 5'-phosphate + H(+) = UMP + CO2. The protein operates within pyrimidine metabolism; UMP biosynthesis via de novo pathway; UMP from orotate: step 2/2. In terms of biological role, catalyzes the decarboxylation of orotidine 5'-monophosphate (OMP) to uridine 5'-monophosphate (UMP). The polypeptide is Orotidine 5'-phosphate decarboxylase (Campylobacter lari (strain RM2100 / D67 / ATCC BAA-1060)).